A 262-amino-acid polypeptide reads, in one-letter code: Acyl-[acyl-carrier-protein]--UDP-N-acetylglucosamine O-acyltransferase (262 aa).

It belongs to the transferase hexapeptide repeat family. LpxA subfamily. In terms of assembly, homotrimer.

Its subcellular location is the cytoplasm. It catalyses the reaction a (3R)-hydroxyacyl-[ACP] + UDP-N-acetyl-alpha-D-glucosamine = a UDP-3-O-[(3R)-3-hydroxyacyl]-N-acetyl-alpha-D-glucosamine + holo-[ACP]. It functions in the pathway glycolipid biosynthesis; lipid IV(A) biosynthesis; lipid IV(A) from (3R)-3-hydroxytetradecanoyl-[acyl-carrier-protein] and UDP-N-acetyl-alpha-D-glucosamine: step 1/6. Involved in the biosynthesis of lipid A, a phosphorylated glycolipid that anchors the lipopolysaccharide to the outer membrane of the cell. The protein is Acyl-[acyl-carrier-protein]--UDP-N-acetylglucosamine O-acyltransferase of Enterobacter sp. (strain 638).